Consider the following 100-residue polypeptide: MSQDTKYEIMYIIRPNIDEEAKTALVERFDTILKDNGAEVIESKDWEKRRLAYEMNGFREGIYHIVNVTSPSTAGAINEFDRLAKINDDIIRHMIVKVEA.

Belongs to the bacterial ribosomal protein bS6 family.

Binds together with bS18 to 16S ribosomal RNA. In Enterococcus faecalis (strain ATCC 700802 / V583), this protein is Small ribosomal subunit protein bS6.